A 314-amino-acid chain; its full sequence is 1,4-dihydroxy-2-naphthoyl-CoA synthase (314 aa).

Substrate is bound by residues arginine 58, 103 to 107 (SGGDQ), tyrosine 115, 157 to 161 (WAAGG), threonine 184, serine 190, tyrosine 287, and lysine 302.

Belongs to the enoyl-CoA hydratase/isomerase family. MenB subfamily.

It catalyses the reaction 2-succinylbenzoyl-CoA + H(+) = 1,4-dihydroxy-2-naphthoyl-CoA + H2O. Its pathway is quinol/quinone metabolism; 1,4-dihydroxy-2-naphthoate biosynthesis; 1,4-dihydroxy-2-naphthoate from chorismate: step 6/7. The protein operates within quinol/quinone metabolism; menaquinone biosynthesis. In terms of biological role, converts o-succinylbenzoyl-CoA (OSB-CoA) to 1,4-dihydroxy-2-naphthoyl-CoA (DHNA-CoA). The polypeptide is 1,4-dihydroxy-2-naphthoyl-CoA synthase (Mycobacterium tuberculosis (strain CDC 1551 / Oshkosh)).